Reading from the N-terminus, the 411-residue chain is Glucose-1-phosphate adenylyltransferase (411 aa).

Alpha-D-glucose 1-phosphate is bound by residues G164, E179–K180, and S197.

This sequence belongs to the bacterial/plant glucose-1-phosphate adenylyltransferase family. As to quaternary structure, homotetramer.

The enzyme catalyses alpha-D-glucose 1-phosphate + ATP + H(+) = ADP-alpha-D-glucose + diphosphate. Its pathway is glycan biosynthesis; glycogen biosynthesis. In terms of biological role, involved in the biosynthesis of ADP-glucose, a building block required for the elongation reactions to produce glycogen. Catalyzes the reaction between ATP and alpha-D-glucose 1-phosphate (G1P) to produce pyrophosphate and ADP-Glc. This Corynebacterium kroppenstedtii (strain DSM 44385 / JCM 11950 / CIP 105744 / CCUG 35717) protein is Glucose-1-phosphate adenylyltransferase.